Reading from the N-terminus, the 442-residue chain is Dol-P-Man:Man(5)GlcNAc(2)-PP-Dol alpha-1,3-mannosyltransferase (442 aa).

Topologically, residues 1–34 (MAAPSSRPESNPPLYKQALDFALDVANGRHALSK) are lumenal. The helical transmembrane segment at 35–55 (LIPPALFLVDALLCGLIIWKV) threads the bilayer. Residues 56–84 (PYTEIDWAAYMEQVSQILSGERDYTKVRG) are Cytoplasmic-facing. Residues 85–105 (GTGPLVYPAAHVYIYTGLYHL) traverse the membrane as a helical segment. The Lumenal portion of the chain corresponds to 106-111 (TDEGRN). Residues 112 to 132 (ILLAQQLFAGLYMVTLAVVMG) traverse the membrane as a helical segment. At 133 to 155 (CYWQAKAPPYLFPLLTLSKRLHS) the chain is on the cytoplasmic side. A helical membrane pass occupies residues 156 to 176 (IFVLRCFNDCFAVLFLWLAIF). Topologically, residues 177-198 (FFQRRNWQAGALLYTLGLGVKM) are lumenal. A helical membrane pass occupies residues 199-219 (TLLLSLPAVGIVLFLGSGSFV). Residue T220 is a topological domain, cytoplasmic. A helical transmembrane segment spans residues 221–241 (TLQLVATMGLVQILIGVPFLA). Residues 242–272 (HYPTEYLSRAFELSRQFFFKWTVNWRFVGEE) are Lumenal-facing. A helical membrane pass occupies residues 273–293 (IFLSKGFALTLLALHVLVLGI). Topologically, residues 294–333 (FITTRWIKPARKSLVQLISPVLLAGKPPLTVPEHRAAARD) are cytoplasmic. Residues 334–354 (VTPRYIMTTILSANAVGLLFA) form a helical membrane-spanning segment. Topologically, residues 355-376 (RSLHYQFYAYVAWSTPFLLWRA) are lumenal. The helical transmembrane segment at 377 to 397 (GLHPVLVYLLWAVHEWAWNVF) threads the bilayer. Residues 398–401 (PSTP) lie on the Cytoplasmic side of the membrane. Residues 402–422 (ASSAVVVGVLGVTVAGVWFGA) traverse the membrane as a helical segment. Residues 423–442 (REEWEPGMKSSSKKEEAAMR) are Lumenal-facing.

Belongs to the glycosyltransferase ALG3 family.

Its subcellular location is the endoplasmic reticulum membrane. It carries out the reaction an alpha-D-Man-(1-&gt;2)-alpha-D-Man-(1-&gt;2)-alpha-D-Man-(1-&gt;3)-[alpha-D-Man-(1-&gt;6)]-beta-D-Man-(1-&gt;4)-beta-D-GlcNAc-(1-&gt;4)-alpha-D-GlcNAc-diphospho-di-trans,poly-cis-dolichol + a di-trans,poly-cis-dolichyl beta-D-mannosyl phosphate = an alpha-D-Man-(1-&gt;2)-alpha-D-Man-(1-&gt;2)-alpha-D-Man-(1-&gt;3)-[alpha-D-Man-(1-&gt;3)-alpha-D-Man-(1-&gt;6)]-beta-D-Man-(1-&gt;4)-beta-D-GlcNAc-(1-&gt;4)-alpha-D-GlcNAc-diphospho-di-trans,poly-cis-dolichol + a di-trans,poly-cis-dolichyl phosphate + H(+). Its pathway is protein modification; protein glycosylation. Functionally, dol-P-Man:Man(5)GlcNAc(2)-PP-Dol alpha-1,3-mannosyltransferase that operates in the biosynthetic pathway of dolichol-linked oligosaccharides, the glycan precursors employed in protein asparagine (N)-glycosylation. The assembly of dolichol-linked oligosaccharides begins on the cytosolic side of the endoplasmic reticulum membrane and finishes in its lumen. The sequential addition of sugars to dolichol pyrophosphate produces dolichol-linked oligosaccharides containing fourteen sugars, including two GlcNAcs, nine mannoses and three glucoses. Once assembled, the oligosaccharide is transferred from the lipid to nascent proteins by oligosaccharyltransferases. In the lumen of the endoplasmic reticulum, adds the first dolichyl beta-D-mannosyl phosphate derived mannose in an alpha-1,3 linkage to Man(5)GlcNAc(2)-PP-dolichol to produce Man(6)GlcNAc(2)-PP-dolichol. This chain is Dol-P-Man:Man(5)GlcNAc(2)-PP-Dol alpha-1,3-mannosyltransferase (alg-3), found in Neurospora crassa (strain ATCC 24698 / 74-OR23-1A / CBS 708.71 / DSM 1257 / FGSC 987).